Here is a 616-residue protein sequence, read N- to C-terminus: Probable Xaa-Pro aminopeptidase P (616 aa).

Positions 413, 424, 522, and 536 each coordinate Mn(2+).

The protein belongs to the peptidase M24B family. Mn(2+) serves as cofactor.

It carries out the reaction Release of any N-terminal amino acid, including proline, that is linked to proline, even from a dipeptide or tripeptide.. Catalyzes the removal of a penultimate prolyl residue from the N-termini of peptides. The sequence is that of Probable Xaa-Pro aminopeptidase P (AMPP) from Paracoccidioides brasiliensis (strain Pb03).